Consider the following 629-residue polypeptide: tRNA uridine 5-carboxymethylaminomethyl modification enzyme MnmG (629 aa).

Residue 11 to 16 participates in FAD binding; the sequence is GGGHAG. NAD(+) is bound at residue 273–287; the sequence is GPRYCPSFEDKAVRF.

This sequence belongs to the MnmG family. In terms of assembly, homodimer. Heterotetramer of two MnmE and two MnmG subunits. FAD is required as a cofactor.

It localises to the cytoplasm. NAD-binding protein involved in the addition of a carboxymethylaminomethyl (cmnm) group at the wobble position (U34) of certain tRNAs, forming tRNA-cmnm(5)s(2)U34. In Mycoplasma mycoides subsp. mycoides SC (strain CCUG 32753 / NCTC 10114 / PG1), this protein is tRNA uridine 5-carboxymethylaminomethyl modification enzyme MnmG.